We begin with the raw amino-acid sequence, 502 residues long: Probable cytosol aminopeptidase (502 aa).

Residues K254 and D259 each contribute to the Mn(2+) site. The active site involves K266. Residues D277, D336, and E338 each coordinate Mn(2+). The active site involves R340.

The protein belongs to the peptidase M17 family. Requires Mn(2+) as cofactor.

The protein resides in the cytoplasm. It catalyses the reaction Release of an N-terminal amino acid, Xaa-|-Yaa-, in which Xaa is preferably Leu, but may be other amino acids including Pro although not Arg or Lys, and Yaa may be Pro. Amino acid amides and methyl esters are also readily hydrolyzed, but rates on arylamides are exceedingly low.. It carries out the reaction Release of an N-terminal amino acid, preferentially leucine, but not glutamic or aspartic acids.. In terms of biological role, presumably involved in the processing and regular turnover of intracellular proteins. Catalyzes the removal of unsubstituted N-terminal amino acids from various peptides. The chain is Probable cytosol aminopeptidase from Tropheryma whipplei (strain TW08/27) (Whipple's bacillus).